We begin with the raw amino-acid sequence, 1323 residues long: Receptor tyrosine-protein kinase let-23 (1323 aa).

The signal sequence occupies residues 1-20 (MRYPPSIGSILLIIPIFLTF). The Extracellular segment spans residues 21 to 818 (FGNSNAQLWK…DIASRQRKTR (798 aa)). N-linked (GlcNAc...) asparagine glycosylation is found at asparagine 91 and asparagine 169. Cystine bridges form between cysteine 220-cysteine 228, cysteine 224-cysteine 236, cysteine 244-cysteine 251, cysteine 248-cysteine 262, cysteine 263-cysteine 271, cysteine 267-cysteine 279, cysteine 282-cysteine 291, cysteine 295-cysteine 322, cysteine 326-cysteine 337, cysteine 341-cysteine 356, and cysteine 359-cysteine 364. Asparagine 255 carries an N-linked (GlcNAc...) asparagine glycan. An N-linked (GlcNAc...) asparagine glycan is attached at asparagine 376. 20 disulfide bridges follow: cysteine 520/cysteine 529, cysteine 524/cysteine 537, cysteine 540/cysteine 549, cysteine 553/cysteine 567, cysteine 570/cysteine 577, cysteine 574/cysteine 585, cysteine 588/cysteine 604, cysteine 608/cysteine 620, cysteine 623/cysteine 632, cysteine 627/cysteine 644, cysteine 647/cysteine 660, cysteine 670/cysteine 693, cysteine 696/cysteine 703, cysteine 700/cysteine 715, cysteine 717/cysteine 731, cysteine 735/cysteine 750, cysteine 753/cysteine 763, cysteine 757/cysteine 771, cysteine 774/cysteine 787, and cysteine 791/cysteine 805. Asparagine 561 carries N-linked (GlcNAc...) asparagine glycosylation. N-linked (GlcNAc...) asparagine glycosylation occurs at asparagine 655. Asparagine 746 carries an N-linked (GlcNAc...) asparagine glycan. An N-linked (GlcNAc...) asparagine glycan is attached at asparagine 776. A helical membrane pass occupies residues 819–839 (MVIIGSVLFGFAVMFLFILLV). Over 840 to 1323 (YWRCQRIGKK…EEVSQKETCL (484 aa)) the chain is Cytoplasmic. The region spanning 885-1152 (TKLDKKLGAG…EFCKVPQLFL (268 aa)) is the Protein kinase domain. Residues 891–899 (LGAGAFGTV) and lysine 919 contribute to the ATP site. Aspartate 1010 acts as the Proton acceptor in catalysis. A compositionally biased stretch (polar residues) spans 1265–1289 (GQTELSPSNGDYYNQPNTPSSSSGY). Residues 1265–1323 (GQTELSPSNGDYYNQPNTPSSSSGYYNEPHLKTKKPETSEEAEAVQYENEEVSQKETCL) are disordered. Positions 1293-1302 (PHLKTKKPET) are enriched in basic and acidic residues. A compositionally biased stretch (acidic residues) spans 1303–1315 (SEEAEAVQYENEE).

Belongs to the protein kinase superfamily. Tyr protein kinase family. EGF receptor subfamily. In terms of tissue distribution, expressed in vulval precursor cells (at protein level). Expressed in ALA neurons, 2 ventral head neurons, a single neuron in the tail, pharyngeal-intestinal valve and posterior arcade epithelial cells.

It localises to the apical cell membrane. Its subcellular location is the basolateral cell membrane. It catalyses the reaction L-tyrosyl-[protein] + ATP = O-phospho-L-tyrosyl-[protein] + ADP + H(+). Tyrosine-protein kinase receptor which, upon binding ligand lin-3, activates 2 signaling cascades: the let-60/Ras and MAP kinase signaling pathway and the let-60-independent phospholipase C-mediated Ca(2+) signaling pathway. Each pathway regulates distinct functions. By activating let-60/Ras, regulates larval development, induction of vulva cell precursors during vulva development, male spicule formation and posterior development of the epidermis. Probably by activating phospholipase plc-3 and inositol 1,4,5-trisphosphate receptor itr-1 signaling cascade downstream of ligand lin-3, plays a role in ovulation by promoting ovulatory gonadal sheath cell contractions. Probably by regulating neuronal transmission in ALA neurons, mediates, independently of let-60/Ras, the decrease in pharyngeal pumping and locomotion during the quiescent state that precedes each larval molt, downstream of lin-3 and upstream of plc-3. The sequence is that of Receptor tyrosine-protein kinase let-23 from Caenorhabditis elegans.